The chain runs to 137 residues: Leaf-specific thionin DB4 (137 aa).

The signal sequence occupies residues 1–28 (MAPSKSIKSVVICVLILGLVLEQVQVEG). 4 disulfides stabilise this stretch: Cys31–Cys68, Cys32–Cys60, Cys40–Cys58, and Cys44–Cys54. Positions 75-137 (LNLLPESGEP…DGAVIQSVEA (63 aa)) are cleaved as a propeptide — acidic domain.

This sequence belongs to the plant thionin (TC 1.C.44) family. 4 C-C subfamily.

The protein localises to the secreted. Functionally, thionins are small plant proteins which are toxic to animal cells. They seem to exert their toxic effect at the level of the cell membrane. Their precise function is not known. This is Leaf-specific thionin DB4 (THI1.3) from Hordeum vulgare (Barley).